The sequence spans 400 residues: Formate-dependent phosphoribosylglycinamide formyltransferase (400 aa).

Residues 22-23 and glutamate 82 contribute to the N(1)-(5-phospho-beta-D-ribosyl)glycinamide site; that span reads EL. Residues arginine 115, lysine 157, 162–167, 197–200, and glutamate 205 each bind ATP; these read SSGKGQ and EGFV. An ATP-grasp domain is found at 120–315; sequence RLAAETLGVP…EFELHARAIL (196 aa). Positions 274 and 286 each coordinate Mg(2+). Residues aspartate 293, lysine 362, and 369–370 each bind N(1)-(5-phospho-beta-D-ribosyl)glycinamide; that span reads RR.

Belongs to the PurK/PurT family. Homodimer.

The enzyme catalyses N(1)-(5-phospho-beta-D-ribosyl)glycinamide + formate + ATP = N(2)-formyl-N(1)-(5-phospho-beta-D-ribosyl)glycinamide + ADP + phosphate + H(+). The protein operates within purine metabolism; IMP biosynthesis via de novo pathway; N(2)-formyl-N(1)-(5-phospho-D-ribosyl)glycinamide from N(1)-(5-phospho-D-ribosyl)glycinamide (formate route): step 1/1. Involved in the de novo purine biosynthesis. Catalyzes the transfer of formate to 5-phospho-ribosyl-glycinamide (GAR), producing 5-phospho-ribosyl-N-formylglycinamide (FGAR). Formate is provided by PurU via hydrolysis of 10-formyl-tetrahydrofolate. The polypeptide is Formate-dependent phosphoribosylglycinamide formyltransferase (Mycolicibacterium smegmatis (strain ATCC 700084 / mc(2)155) (Mycobacterium smegmatis)).